The primary structure comprises 578 residues: Glucans biosynthesis protein G (578 aa).

The N-terminal stretch at 1 to 37 is a signal peptide; that stretch reads MIVSPCIAPRIPGTRLRKAMLAGVALVGLLSAGQLWA. Residues 511–578 are disordered; sequence VPVEAPKPAK…TWSYQLPADE (68 aa). Positions 517 to 543 are enriched in basic and acidic residues; sequence KPAKDSKQDKAAAKHAHAKAEKAKAEQ. The span at 544 to 554 shows a compositional bias: low complexity; sequence PAEQPAADAAS.

The protein belongs to the OpgD/OpgG family.

The protein localises to the periplasm. The protein operates within glycan metabolism; osmoregulated periplasmic glucan (OPG) biosynthesis. In terms of biological role, involved in the biosynthesis of osmoregulated periplasmic glucans (OPGs). This is Glucans biosynthesis protein G from Pseudomonas entomophila (strain L48).